The chain runs to 147 residues: Large ribosomal subunit protein uL13 (147 aa).

The protein belongs to the universal ribosomal protein uL13 family. In terms of assembly, part of the 50S ribosomal subunit.

Its function is as follows. This protein is one of the early assembly proteins of the 50S ribosomal subunit, although it is not seen to bind rRNA by itself. It is important during the early stages of 50S assembly. The sequence is that of Large ribosomal subunit protein uL13 from Lactobacillus johnsonii (strain CNCM I-12250 / La1 / NCC 533).